The primary structure comprises 248 residues: MREMLQVERPKLILDDGKRTDGRKPDELRSIKIELGVLKNADGSAIFEMGNTKAIAAVYGPKEMHPRHLSLPDRAVLRVRYHMTPFSTDERKNPAPSRREIELSKVIREALESAVLVELFPRTAIDVFTEILQADAGSRLVSLMAASLALADAGIPMRDLIAGVAVGKADGVIILDLNETEDMWGEADMPIAMMPSLNQVTLFQLNGSMTPDEFRQAFDLAVKGINIIYNLEREALKSKYVEFKEEGV.

This sequence belongs to the RNase PH family. Rrp41 subfamily. Component of the archaeal exosome complex. Forms a hexameric ring-like arrangement composed of 3 Rrp41-Rrp42 heterodimers. The hexameric ring associates with a trimer of Rrp4 and/or Csl4 subunits.

Its subcellular location is the cytoplasm. Functionally, catalytic component of the exosome, which is a complex involved in RNA degradation. Has 3'-&gt;5' exoribonuclease activity. Can also synthesize heteromeric RNA-tails. Binds RNA. This chain is Exosome complex component Rrp41, found in Saccharolobus solfataricus (strain ATCC 35092 / DSM 1617 / JCM 11322 / P2) (Sulfolobus solfataricus).